Consider the following 158-residue polypeptide: Snaclec mucrocetin subunit alpha (158 aa).

The N-terminal stretch at 1-23 (MGRFIFVSFGLLVVFLSLSGTGA) is a signal peptide. Disulfide bonds link cysteine 27/cysteine 38, cysteine 55/cysteine 152, and cysteine 127/cysteine 144. Positions 34–153 (YDRYCYQAFS…CGRENPFVCK (120 aa)) constitute a C-type lectin domain.

This sequence belongs to the snaclec family. As to quaternary structure, tetramer of heterodimers of alpha and beta subunits (alphabeta)(4); disulfide-linked. As to expression, expressed by the venom gland.

The protein resides in the secreted. In terms of biological role, platelet-agglutinating factor that acts in a vWF-independent manner. Binds specifically to platelet GPIbalpha (GP1BA) to a distinct binding site from that of flavocetin-A. This Protobothrops mucrosquamatus (Taiwan habu) protein is Snaclec mucrocetin subunit alpha.